A 377-amino-acid polypeptide reads, in one-letter code: UPF0754 membrane protein LMHCC_0318 (377 aa).

2 helical membrane-spanning segments follow: residues 1 to 21 (MSVLFTILLMAVIGGFIGAMT) and 357 to 377 (YLGGILGGFIGVIQGILAMWI).

The protein belongs to the UPF0754 family.

Its subcellular location is the cell membrane. The polypeptide is UPF0754 membrane protein LMHCC_0318 (Listeria monocytogenes serotype 4a (strain HCC23)).